We begin with the raw amino-acid sequence, 120 residues long: Seripauperin-6 (120 aa).

The signal sequence occupies residues 1–20; sequence MVKLTSIAAGVAAIAATASA.

It belongs to the SRP1/TIP1 family. Seripauperin subfamily.

The protein is Seripauperin-6 (PAU6) of Saccharomyces cerevisiae (strain ATCC 204508 / S288c) (Baker's yeast).